The chain runs to 33 residues: Vejocalcin (33 aa).

3 cysteine pairs are disulfide-bonded: Cys-3/Cys-17, Cys-10/Cys-21, and Cys-16/Cys-32. Residues Arg-23–Arg-24 are essential for stimulation of [3H]ryanodine binding to RYR1.

Expressed by the venom gland.

It is found in the secreted. Its function is as follows. This toxin stabilizes ryanodine receptor 1 (RyR1) opening in a long-lasting subconductance state (60% of the full conductance state). Furthermore, it triggers calcium release from sarcoplasmic vesicles (31 nM are enough to induce a sharp release, and 65% of the total calcium is released after toxin (100 nM) addition) probably by acting as a cell-penetrating peptide (CPP). In addition, it has been shown to dose-dependently stimulate ryanodine binding to RyR1 (EC(50)=3.7 nM). It also augments the bell-shaped calcium-[3H]ryanodine binding curve that is maximal at about 10 uM calcium concentration. It binds a different site as ryanodine. It acts synergistically with caffeine. In vivo, intracerebroventricular injection into mice induces neurotoxic symptoms, followed by death. This Vaejovis mexicanus (Mexican scorpion) protein is Vejocalcin.